A 474-amino-acid polypeptide reads, in one-letter code: Probable periplasmic serine endoprotease DegP-like (474 aa).

A signal peptide spans 1–26 (MTRMTRHLALWMLLSLAILASQSAMA). Active-site charge relay system residues include histidine 116, aspartate 146, and serine 219. Substrate-binding positions include 217–219 (GNS) and 274–278 (LGVMI). PDZ domains are found at residues 263 to 354 (LRND…LRNG) and 360 to 462 (TVTV…YRSG).

It belongs to the peptidase S1C family.

The protein localises to the periplasm. It carries out the reaction Acts on substrates that are at least partially unfolded. The cleavage site P1 residue is normally between a pair of hydrophobic residues, such as Val-|-Val.. Might be efficient in the degradation of transiently denatured and unfolded proteins which accumulate in the periplasm following stress conditions. This chain is Probable periplasmic serine endoprotease DegP-like (mucD), found in Halomonas elongata (strain ATCC 33173 / DSM 2581 / NBRC 15536 / NCIMB 2198 / 1H9).